Reading from the N-terminus, the 833-residue chain is Lon protease (833 aa).

Residues 3-198 (YPFMATRGVI…LIFSFLVELK (196 aa)) form the Lon N-terminal domain. 390 to 397 (GPPGTGKT) is an ATP binding site. A Lon proteolytic domain is found at 627–808 (YERIGAVNGL…DEIFENLFGK (182 aa)). Catalysis depends on residues serine 714 and lysine 757.

It belongs to the peptidase S16 family. In terms of assembly, homohexamer. Organized in a ring with a central cavity.

The protein resides in the cytoplasm. It catalyses the reaction Hydrolysis of proteins in presence of ATP.. ATP-dependent serine protease that mediates the selective degradation of mutant and abnormal proteins as well as certain short-lived regulatory proteins. Required for cellular homeostasis and for survival from DNA damage and developmental changes induced by stress. Degrades polypeptides processively to yield small peptide fragments that are 5 to 10 amino acids long. Binds to DNA in a double-stranded, site-specific manner. The sequence is that of Lon protease from Mycoplasma mobile (strain ATCC 43663 / 163K / NCTC 11711) (Mesomycoplasma mobile).